A 480-amino-acid chain; its full sequence is MSFSAFELGRFTGRPVRLFVFTRQHLTWRFANSDRDIVSGGFTYLAARIDRSDIQHTTEREKDQITITFPYLLNPAADPLPVTQALGNQWRPYHPVDVIRVVCMVMHVGDTDPPQVEWVGRVIQPRLSDTEMELTCAPHSSIALARNQGAKFQTSCWKTVYSTGLRGCNLSPGAHRVTGRVARLEQLPTDPPQGAHVLVPDMAAHLAPLAGQVATWTYEAQVPHSGTVASVLKFHVRLNNVTAIAVGTVLHWTAADGIAHHGTVTGLFGTVAVLNTTEGITAGSVCHWSVAEARQGTATILQAYHAYDWVSQAAGGSSSGFSWDDASGLHDAHSGTAWSVTYTRRSALVLSDVTGLEEGSSITVALSGSGVSGTLSAVAGLQLTAAHFASAAYSLEGGTLTYTDANGLLIRRSIASHTLGSTTLTLSAGGPNPVVNDAVTVLPTCPRTWDACAARGNTIHFGGAVYRPLHTPDGVSMSWG.

This is an uncharacterized protein from Xylella fastidiosa (strain 9a5c).